A 552-amino-acid chain; its full sequence is Dihydroxy-acid dehydratase (552 aa).

Asp-78 contacts Mg(2+). [2Fe-2S] cluster is bound at residue Cys-119. Mg(2+) contacts are provided by Asp-120 and Lys-121. Lys-121 is modified (N6-carboxylysine). Cys-191 serves as a coordination point for [2Fe-2S] cluster. Position 442 (Glu-442) interacts with Mg(2+). The active-site Proton acceptor is the Ser-468.

It belongs to the IlvD/Edd family. In terms of assembly, homodimer. It depends on [2Fe-2S] cluster as a cofactor. Requires Mg(2+) as cofactor.

The enzyme catalyses (2R)-2,3-dihydroxy-3-methylbutanoate = 3-methyl-2-oxobutanoate + H2O. The catalysed reaction is (2R,3R)-2,3-dihydroxy-3-methylpentanoate = (S)-3-methyl-2-oxopentanoate + H2O. The protein operates within amino-acid biosynthesis; L-isoleucine biosynthesis; L-isoleucine from 2-oxobutanoate: step 3/4. Its pathway is amino-acid biosynthesis; L-valine biosynthesis; L-valine from pyruvate: step 3/4. Functions in the biosynthesis of branched-chain amino acids. Catalyzes the dehydration of (2R,3R)-2,3-dihydroxy-3-methylpentanoate (2,3-dihydroxy-3-methylvalerate) into 2-oxo-3-methylpentanoate (2-oxo-3-methylvalerate) and of (2R)-2,3-dihydroxy-3-methylbutanoate (2,3-dihydroxyisovalerate) into 2-oxo-3-methylbutanoate (2-oxoisovalerate), the penultimate precursor to L-isoleucine and L-valine, respectively. This chain is Dihydroxy-acid dehydratase, found in Ruminiclostridium cellulolyticum (strain ATCC 35319 / DSM 5812 / JCM 6584 / H10) (Clostridium cellulolyticum).